Here is a 199-residue protein sequence, read N- to C-terminus: Peroxiredoxin-1 (199 aa).

Positions 6 to 165 (AFIGKPAPDF…TLRLVQAFQF (160 aa)) constitute a Thioredoxin domain. Cys52 serves as the catalytic Cysteine sulfenic acid (-SOH) intermediate.

Belongs to the peroxiredoxin family. AhpC/Prx1 subfamily. As to quaternary structure, homodimer; disulfide-linked, upon oxidation. 5 homodimers assemble to form a ring-like decamer. Interacts with GDPD5; forms a mixed-disulfide with GDPD5. Interacts with SESN1 and SESN2. Post-translationally, the enzyme can be inactivated by further oxidation of the cysteine sulfenic acid (C(P)-SOH) to sulphinic acid (C(P)-SO2H) instead of its condensation to a disulfide bond. It can be reactivated by forming a transient disulfide bond with sulfiredoxin SRXN1, which reduces the cysteine sulfinic acid in an ATP- and Mg-dependent manner.

It localises to the cytoplasm. The enzyme catalyses a hydroperoxide + [thioredoxin]-dithiol = an alcohol + [thioredoxin]-disulfide + H2O. In terms of biological role, thiol-specific peroxidase that catalyzes the reduction of hydrogen peroxide and organic hydroperoxides to water and alcohols, respectively. Plays a role in cell protection against oxidative stress by detoxifying peroxides and as sensor of hydrogen peroxide-mediated signaling events. Might participate in the signaling cascades of growth factors and tumor necrosis factor-alpha by regulating the intracellular concentrations of H(2)O(2). Reduces an intramolecular disulfide bond in GDPD5 that gates the ability to GDPD5 to drive postmitotic motor neuron differentiation. The protein is Peroxiredoxin-1 (PRDX1) of Gallus gallus (Chicken).